Here is a 112-residue protein sequence, read N- to C-terminus: UPF0060 membrane protein IL2332 (112 aa).

Helical transmembrane passes span 10 to 30 (LGLF…PYLW), 36 to 56 (SAWL…LLTL), 64 to 84 (VYAA…KAVE), and 90 to 110 (TYDA…AVGW).

Belongs to the UPF0060 family.

Its subcellular location is the cell inner membrane. The chain is UPF0060 membrane protein IL2332 from Idiomarina loihiensis (strain ATCC BAA-735 / DSM 15497 / L2-TR).